Consider the following 101-residue polypeptide: Class II hydrophobin 5 (101 aa).

The first 15 residues, M1–A15, serve as a signal peptide directing secretion. Cystine bridges form between C33–C83, C44–C74, C45–C57, and C84–C95.

The protein belongs to the cerato-ulmin hydrophobin family. Homodimer. Homodimers further self-assemble to form highly ordered films at water-air interfaces through intermolecular interactions.

Its subcellular location is the secreted. It localises to the cell wall. Its function is as follows. Aerial growth, conidiation, and dispersal of filamentous fungi in the environment rely upon a capability of their secreting small amphipathic proteins called hydrophobins (HPBs) with low sequence identity. Class I can self-assemble into an outermost layer of rodlet bundles on aerial cell surfaces, conferring cellular hydrophobicity that supports fungal growth, development and dispersal; whereas Class II form highly ordered films at water-air interfaces through intermolecular interactions but contribute nothing to the rodlet structure. The sequence is that of Class II hydrophobin 5 from Trichoderma asperellum (strain ATCC 204424 / CBS 433.97 / NBRC 101777).